A 319-amino-acid polypeptide reads, in one-letter code: MNPGRGGAYAAGRDGTRGTRRPHGLSHLDLLESESVHIFREVAGEFERPVILFSGGKDSIVMLHLALKSFAPAPVPFALLHVDTGHNFPEVIAYRDRVVAALGLRLEVASVQDFIDNGTLRERPDGTRNPLQTVPLLDAIGRHRFDAVFGGGRRDEEKARAKERVFSLRDEFGGWDPRRQRPELWRLYNGRHAPGEHVRVFPLSNWTELDVWQYVAREEIELPTIYYAHEREVFRRGGMWLAPGEWGGPREGEAVEKRRVRYRTVGDMSCTGAVDSAAATVADVVAEIATSRLTERGATRADDKLSEAAMEDRKREGYF.

2 disordered regions span residues methionine 1–proline 22 and arginine 296–phenylalanine 319.

Belongs to the PAPS reductase family. CysD subfamily.

The catalysed reaction is sulfate + ATP + H(+) = adenosine 5'-phosphosulfate + diphosphate. It participates in antibiotic biosynthesis; mitomycin C biosynthesis. In terms of biological role, with CysN forms the ATP sulfurylase (ATPS) that catalyzes the adenylation of sulfate producing adenosine 5'-phosphosulfate (APS) and diphosphate, the first enzymatic step in sulfur assimilation pathway. APS synthesis involves the formation of a high-energy phosphoric-sulfuric acid anhydride bond driven by GTP hydrolysis by CysN coupled to ATP hydrolysis by CysD. This Streptomyces lavendulae protein is Sulfate adenylyltransferase subunit 2 (mmcV).